We begin with the raw amino-acid sequence, 467 residues long: Cis-zeatin O-glucosyltransferase 1 (467 aa).

H21 functions as the Proton acceptor in the catalytic mechanism. Residues H21 and N91 each coordinate an anthocyanidin. The Charge relay role is filled by D127. 9 residues coordinate UDP-alpha-D-glucose: A343, Q345, H360, W363, N364, S365, E368, D384, and Q385.

It belongs to the UDP-glycosyltransferase family. As to expression, highly expressed in root. Expressed at lower level in kernel and cob. Weakly expressed in leaves. Weakly or not expressed in stems.

It carries out the reaction cis-zeatin + UDP-alpha-D-glucose = O-beta-D-glucosyl-cis-zeatin + UDP + H(+). In terms of biological role, utilizes UDP-glucose as the sugar donor and catalyzes the formation of O-beta-D-glucosyl-cis-zeatin from cis-zeatin. May regulate active versus storage forms of cytokinins and could have an impact on seed growth. This is Cis-zeatin O-glucosyltransferase 1 (CISZOG1) from Zea mays (Maize).